Consider the following 517-residue polypeptide: Zinc finger protein AEBP2 (517 aa).

The tract at residues 1–229 (MAAAITDMAD…DSEDSISSTI (229 aa)) is disordered. An N-acetylalanine modification is found at A2. Residues S18 and S24 each carry the phosphoserine modification. Positions 36–51 (PEEEEEEEEEEEEAEA) are enriched in acidic residues. Over residues 61–78 (GGSGGGGGGGGGGVGGGE) the composition is skewed to gly residues. Residues 94 to 121 (GEDEDEEEDDEEEEDESSSSGGGEEESS) show a composition bias toward acidic residues. Residues 122–150 (AESLVGSSGGSSSDETRSLSPGAASSSSG) are compositionally biased toward low complexity. S141 is modified (phosphoserine). Residues 152-163 (GDGKEGLEEPKG) are compositionally biased toward basic and acidic residues. 2 stretches are compositionally biased toward gly residues: residues 166-175 (GSQGGGGGGS) and 185-196 (GDEGYGTGGGGS). S206, S210, and S211 each carry phosphoserine. The tract at residues 209–294 (MSSDGEPLSR…IHVDGQRGGV (86 aa)) is interaction with RBBP4. The C2H2-type 1 zinc-finger motif lies at 261–286 (YNCCWDQCQACFNSSPDLADHIRSIH). The C2H2-type 2; degenerate zinc finger occupies 300–322 (KGCKVYNTPSTSQSWLQRHMLTH). Residues 328–352 (FKCVVGGCNASFASQGGLARHVPTH) form a C2H2-type 3 zinc finger. Over residues 352–365 (HFSQQNSSKVSSQP) the composition is skewed to polar residues. The interval 352 to 394 (HFSQQNSSKVSSQPKAKEESPSKAGMNKRRKLKNKRRRSLPRP) is disordered. Positions 377–392 (MNKRRKLKNKRRRSLP) are enriched in basic residues. S390 carries the post-translational modification Phosphoserine. The interval 407–478 (RHRAICFNLS…QLKTKVVHLS (72 aa)) is interaction with SUZ12. The segment at 495 to 517 (TMPQKRLKRTLIRKVFNLYLSKQ) is important for nucleosome binding activity of the PRC2 complex.

Belongs to the AEBP2/jing C2H2-type zinc-finger family. Self-associates. Associates with the PRC2 complex, which consists of the core components EED, EZH1 or EZH2, SUZ12, and RBBP4, and various combinations of accessory subunits including AEBP2, JARID2, PHF19, MTF2 and EPOP. Found in a monomeric PRC2.2 (class 2) complex consisting of at least SUZ12, RBBP4, AEBP2 and JARID2. Within the PRC2 complex, interacts directly with SUZ12; competes with PHF19 for SUZ12 binding. Interacts with EED, EZH2, and RBBP4. May also interact with RBBP7.

Its subcellular location is the nucleus. Acts as an accessory subunit for the core Polycomb repressive complex 2 (PRC2), which mediates histone H3K27 (H3K27me3) trimethylation on chromatin leading to transcriptional repression of the affected target gene. Plays a role in nucleosome localization of the PRC2 complex. The protein is Zinc finger protein AEBP2 (AEBP2) of Homo sapiens (Human).